The primary structure comprises 126 residues: Acidic phospholipase A2 S1E6-b (126 aa).

A signal peptide spans 1–3 (VEG). 7 disulfides stabilise this stretch: C29–C119, C31–C47, C46–C98, C52–C126, C53–C91, C60–C84, and C78–C89. Ca(2+) is bound by residues Y30, G32, and G34. Residue H50 is part of the active site. Ca(2+) is bound at residue D51. D92 is an active-site residue.

In terms of assembly, homodimer. It depends on Ca(2+) as a cofactor. As to expression, expressed by the venom gland.

Its subcellular location is the secreted. It catalyses the reaction a 1,2-diacyl-sn-glycero-3-phosphocholine + H2O = a 1-acyl-sn-glycero-3-phosphocholine + a fatty acid + H(+). Functionally, snake venom phospholipase that inhibits ADP-induced platelet aggregation. PLA2 catalyzes the calcium-dependent hydrolysis of the 2-acyl groups in 3-sn-phosphoglycerides. The protein is Acidic phospholipase A2 S1E6-b of Calloselasma rhodostoma (Malayan pit viper).